A 137-amino-acid polypeptide reads, in one-letter code: ATP synthase epsilon chain, chloroplastic (137 aa).

Belongs to the ATPase epsilon chain family. F-type ATPases have 2 components, CF(1) - the catalytic core - and CF(0) - the membrane proton channel. CF(1) has five subunits: alpha(3), beta(3), gamma(1), delta(1), epsilon(1). CF(0) has three main subunits: a, b and c.

It is found in the plastid. Its subcellular location is the chloroplast thylakoid membrane. Produces ATP from ADP in the presence of a proton gradient across the membrane. This Hordeum vulgare (Barley) protein is ATP synthase epsilon chain, chloroplastic.